The primary structure comprises 299 residues: MTGDRPWHGQCSLQLISKTAADDLQSQLTVHQSQCTAPFKIQRANLDDDGRCQLPLLHTAGGLVGGDQLSVNVKAGASSRGLVTSVAAQKVYGSVGRSKQHPKGLWASQECHFELATNADLEWLPQELVVFQGGLYKQRMQVELQPKASFLSAEVVRLGRTAAGETLNEGAWRSSLEICRQTPIGRQWELVDQLELNSDVLQNLHGMGRQPVFGSFVWAAPDPLTAEVMETLLRNCRTDRANLEGSMACGGLDQGLVARYIGPSSQAARQWFTRIWARTRQLRRLSTPQPPREWPLQEE.

It belongs to the UreD family. In terms of assembly, ureD, UreF and UreG form a complex that acts as a GTP-hydrolysis-dependent molecular chaperone, activating the urease apoprotein by helping to assemble the nickel containing metallocenter of UreC. The UreE protein probably delivers the nickel.

Its subcellular location is the cytoplasm. Required for maturation of urease via the functional incorporation of the urease nickel metallocenter. The polypeptide is Urease accessory protein UreD (Prochlorococcus marinus (strain MIT 9303)).